Here is a 312-residue protein sequence, read N- to C-terminus: Glyoxylate/hydroxypyruvate reductase A (312 aa).

The active site involves R227. The active-site Proton donor is the H275.

The protein belongs to the D-isomer specific 2-hydroxyacid dehydrogenase family. GhrA subfamily.

Its subcellular location is the cytoplasm. The catalysed reaction is glycolate + NADP(+) = glyoxylate + NADPH + H(+). The enzyme catalyses (R)-glycerate + NAD(+) = 3-hydroxypyruvate + NADH + H(+). It catalyses the reaction (R)-glycerate + NADP(+) = 3-hydroxypyruvate + NADPH + H(+). Functionally, catalyzes the NADPH-dependent reduction of glyoxylate and hydroxypyruvate into glycolate and glycerate, respectively. In Escherichia fergusonii (strain ATCC 35469 / DSM 13698 / CCUG 18766 / IAM 14443 / JCM 21226 / LMG 7866 / NBRC 102419 / NCTC 12128 / CDC 0568-73), this protein is Glyoxylate/hydroxypyruvate reductase A.